Here is a 491-residue protein sequence, read N- to C-terminus: UDP-N-acetylmuramate--L-alanine ligase (491 aa).

An ATP-binding site is contributed by 126–132 (GTHGKTT).

This sequence belongs to the MurCDEF family.

It localises to the cytoplasm. It catalyses the reaction UDP-N-acetyl-alpha-D-muramate + L-alanine + ATP = UDP-N-acetyl-alpha-D-muramoyl-L-alanine + ADP + phosphate + H(+). It participates in cell wall biogenesis; peptidoglycan biosynthesis. Its function is as follows. Cell wall formation. The sequence is that of UDP-N-acetylmuramate--L-alanine ligase from Salmonella typhimurium (strain LT2 / SGSC1412 / ATCC 700720).